The primary structure comprises 212 residues: Dephospho-CoA kinase (212 aa).

The 202-residue stretch at 3-204 (ILGLTGSIGM…GSRPAAPVGG (202 aa)) folds into the DPCK domain. 11–16 (GMGKST) serves as a coordination point for ATP.

It belongs to the CoaE family.

It is found in the cytoplasm. It carries out the reaction 3'-dephospho-CoA + ATP = ADP + CoA + H(+). The protein operates within cofactor biosynthesis; coenzyme A biosynthesis; CoA from (R)-pantothenate: step 5/5. Functionally, catalyzes the phosphorylation of the 3'-hydroxyl group of dephosphocoenzyme A to form coenzyme A. This Paramagnetospirillum magneticum (strain ATCC 700264 / AMB-1) (Magnetospirillum magneticum) protein is Dephospho-CoA kinase.